The primary structure comprises 314 residues: Olfactory receptor 5G29 (314 aa).

Over 1–25 the chain is Extracellular; it reads MEEKNQTIVMEFFFLGLTDHLYQKI. Asn5 carries N-linked (GlcNAc...) asparagine glycosylation. The chain crosses the membrane as a helical span at residues 26-46; it reads ALFITILFVYLVTLGGNLGMI. Topologically, residues 47–54 are cytoplasmic; the sequence is TLIWADPR. A helical transmembrane segment spans residues 55–75; that stretch reads LHTPMYFFLSHLSFVDMCSSS. Residues 76–99 are Extracellular-facing; sequence SIAPKMLCDIFAEEKRISFMGCAA. Residues Cys97 and Cys189 are joined by a disulfide bond. A helical transmembrane segment spans residues 100–120; that stretch reads QMWFFGFFVGTECFLLASMAY. Residues 121–133 are Cytoplasmic-facing; it reads DRYTAICKPLLYT. Residues 134-154 traverse the membrane as a helical segment; sequence LLMSQRVCVHLVVGPYVFAII. Over 155–196 the chain is Extracellular; that stretch reads NITTHTTLAFCLPFCGSNTINHFFCDVSPLLSLACADSWVNK. A helical transmembrane segment spans residues 197–217; the sequence is VVLFVLSGAIGVFSGLIIIVS. Topologically, residues 218–237 are cytoplasmic; sequence YVSILMTIFKIQTADGKQKA. Residues 238-258 form a helical membrane-spanning segment; it reads FSTCSSHLSAVSILYGTLFFI. The Extracellular portion of the chain corresponds to 259-271; that stretch reads YVRPSASFSLNIN. Residues 272–292 form a helical membrane-spanning segment; it reads KMISLFYTVVIPMLNPLIYSL. Residues 293 to 312 are Cytoplasmic-facing; that stretch reads RNKEVKGAFRRKVQKKHFPA.

This sequence belongs to the G-protein coupled receptor 1 family.

The protein localises to the cell membrane. In terms of biological role, potential odorant receptor. This chain is Olfactory receptor 5G29, found in Mus musculus (Mouse).